Reading from the N-terminus, the 65-residue chain is Large ribosomal subunit protein bL35 (65 aa).

A disordered region spans residues 24 to 48 (RRKAGKSHLLEHKSSDKKRSMSKTT). The segment covering 31–42 (HLLEHKSSDKKR) has biased composition (basic and acidic residues).

This sequence belongs to the bacterial ribosomal protein bL35 family.

The protein is Large ribosomal subunit protein bL35 of Nostoc punctiforme (strain ATCC 29133 / PCC 73102).